The primary structure comprises 347 residues: MLFREGTRLINSRNWAKLVRPEAVINNMESNTTTYGRFEYEPLERGYGITIGNALRRVLLSSLQGAAFVSVKILGVQHEFTTIPGILEDVTDIILNLKQVRLAMDTDEPQHLSLFVSKKGIVTAADIQTNQHVEVLNPEQHIATLTEDIELRMEFEVRMGKGYVPAEMHEDLHEEIGLIKLDSSFSPIRNVTYVVEQARVGQMTNYDKLVLEVWTDGSVSPEDAIAYSAKIIKDQISVFINFDERISGSGGNEGSGSSDLNDNLFKGIDELELSVRATNCLRSANISTVGELVQKAEADMLKTKNFGKKSLDEIKALLTSMGLDFGMKIDGFEKKYQEWKRKQHHEA.

Positions 1–243 (MLFREGTRLI…DQISVFINFD (243 aa)) are alpha N-terminal domain (alpha-NTD). An alpha C-terminal domain (alpha-CTD) region spans residues 255-347 (SGSSDLNDNL…EWKRKQHHEA (93 aa)).

It belongs to the RNA polymerase alpha chain family. In terms of assembly, homodimer. The RNAP catalytic core consists of 2 alpha, 1 beta, 1 beta' and 1 omega subunit. When a sigma factor is associated with the core the holoenzyme is formed, which can initiate transcription.

The catalysed reaction is RNA(n) + a ribonucleoside 5'-triphosphate = RNA(n+1) + diphosphate. In terms of biological role, DNA-dependent RNA polymerase catalyzes the transcription of DNA into RNA using the four ribonucleoside triphosphates as substrates. In Lawsonia intracellularis (strain PHE/MN1-00), this protein is DNA-directed RNA polymerase subunit alpha.